Reading from the N-terminus, the 493-residue chain is Alpha-amylase-related protein (493 aa).

The N-terminal stretch at 1-19 is a signal peptide; sequence MFKLALTLTLCLAGSLSLA. A Pyrrolidone carboxylic acid modification is found at Gln-20. An intrachain disulfide couples Cys-47 to Cys-103. Ca(2+) is bound by residues Asn-117, Gln-168, and Asp-177. Cys-156 and Cys-170 are joined by a disulfide. Arg-205 is a binding site for chloride. The active-site Nucleophile is the Asp-207. His-211 provides a ligand contact to Ca(2+). The Proton donor role is filled by Glu-244. Chloride is bound by residues Asn-307 and Arg-342. 3 disulfide bridges follow: Cys-375-Cys-381, Cys-417-Cys-440, and Cys-447-Cys-459.

This sequence belongs to the glycosyl hydrolase 13 family. Monomer. Ca(2+) is required as a cofactor. Chloride serves as cofactor.

It is found in the secreted. It catalyses the reaction Endohydrolysis of (1-&gt;4)-alpha-D-glucosidic linkages in polysaccharides containing three or more (1-&gt;4)-alpha-linked D-glucose units.. The polypeptide is Alpha-amylase-related protein (Amyrel) (Drosophila yakuba (Fruit fly)).